The primary structure comprises 297 residues: Bifunctional protein FolD (297 aa).

NADP(+)-binding positions include 168–170 (GRG), T195, and V236.

It belongs to the tetrahydrofolate dehydrogenase/cyclohydrolase family. In terms of assembly, homodimer.

It carries out the reaction (6R)-5,10-methylene-5,6,7,8-tetrahydrofolate + NADP(+) = (6R)-5,10-methenyltetrahydrofolate + NADPH. The catalysed reaction is (6R)-5,10-methenyltetrahydrofolate + H2O = (6R)-10-formyltetrahydrofolate + H(+). It functions in the pathway one-carbon metabolism; tetrahydrofolate interconversion. Catalyzes the oxidation of 5,10-methylenetetrahydrofolate to 5,10-methenyltetrahydrofolate and then the hydrolysis of 5,10-methenyltetrahydrofolate to 10-formyltetrahydrofolate. The protein is Bifunctional protein FolD of Bifidobacterium animalis subsp. lactis (strain AD011).